We begin with the raw amino-acid sequence, 105 residues long: Small ribosomal subunit protein eS24 (105 aa).

Residues 86–105 (LERNKIEADEEADEEAAEEA) are disordered. A compositionally biased stretch (acidic residues) spans 93-105 (ADEEADEEAAEEA).

It belongs to the eukaryotic ribosomal protein eS24 family.

This chain is Small ribosomal subunit protein eS24, found in Natronomonas pharaonis (strain ATCC 35678 / DSM 2160 / CIP 103997 / JCM 8858 / NBRC 14720 / NCIMB 2260 / Gabara) (Halobacterium pharaonis).